Reading from the N-terminus, the 160-residue chain is Cyclic pyranopterin monophosphate synthase (160 aa).

Substrate is bound by residues 77–79 (MCH) and 114–115 (ME). Asp129 is a catalytic residue.

This sequence belongs to the MoaC family. As to quaternary structure, homohexamer; trimer of dimers.

The catalysed reaction is (8S)-3',8-cyclo-7,8-dihydroguanosine 5'-triphosphate = cyclic pyranopterin phosphate + diphosphate. It participates in cofactor biosynthesis; molybdopterin biosynthesis. Functionally, catalyzes the conversion of (8S)-3',8-cyclo-7,8-dihydroguanosine 5'-triphosphate to cyclic pyranopterin monophosphate (cPMP). This chain is Cyclic pyranopterin monophosphate synthase, found in Listeria monocytogenes serovar 1/2a (strain ATCC BAA-679 / EGD-e).